We begin with the raw amino-acid sequence, 899 residues long: MPQMDPELFDRGQFQAELALKSSPIAAFKKAIRHAREVLDARFKGGRDIRRLVEDRAWFVDQILQEAWKRFAWSEDADIALLAVGGYGRGELHPYSDIDLLILLDSSDHEIFREPIEGFLTLLWDIGLEVGQSVRSVDECAEEARADLTVITNLMESRTIAGPEHLRQRMQQVTSSEQMWPSKHFYLAKREERKARHAKYNDTEYNLEPNVKGSPGGLRDIQTVLWVARRQFGTLNLQALVGQGFLLESEYALLSSSQEFLWKVRYALHMLAGRAEDRLLFDYQARIAALFGYQDGDGKRSIEHFMQKYYRVVMGISELSDLINQHFEEVILRAGESGPATPLNSRFQVRDGYIEVTHPNVFKRTPFAILEVFVLMAQNPEIKGVRADSIRLLRDSRHLIDDDFRKDIRNTSLFIELFKCKEGIHRNLRRMNRYGILGRYLPEFGHIVGQMQHDLFHIYTVDAHTLNLIKHLRKFRWPELAEKFPLASKLIDRLPKPELIYLAGLYHDIGKGRGGDHSELGAVDAEAFARRHQLPAWDSALIVWLVQHHLVMSTTAQRKDLSDPQVIHDFAQFVGDQTHLDYLYVLTVADINATNPSLWNSWRASLLRQLYTETKRALRRGLENPLDREEQIRQTQSAALDILVRGGTDPDDAEQLWSQLGDDYFLRHTANDVAWHTEAILQHPADSGPLVLIKETTQREFEGGTQIFIYAPDQHDFFAVTVAAMSQLNLNIHDARIITSTSQFTLDTYVVLDADGGSIGDNPARIKQIREGLIEALKNPDEYPTIIQRRVPRQLKHFAFAPQVTIHNDAQRPVTILELTAPDRPGLLARIGRIFLEYDLSLQNAKIATLGERVEDVFFVTDANNQPLSDPELCARLQETIVRRLSEPSAQPQSLQIDI.

Residues 1 to 342 (MPQMDPELFD…RAGESGPATP (342 aa)) form a uridylyltransferase region. The tract at residues 343-705 (LNSRFQVRDG…TTQREFEGGT (363 aa)) is uridylyl-removing. Residues 461-583 (VDAHTLNLIK…VGDQTHLDYL (123 aa)) form the HD domain. ACT domains lie at 706 to 784 (QIFI…DEYP) and 816 to 897 (ILEL…SLQI).

The protein belongs to the GlnD family. It depends on Mg(2+) as a cofactor.

It catalyses the reaction [protein-PII]-L-tyrosine + UTP = [protein-PII]-uridylyl-L-tyrosine + diphosphate. The enzyme catalyses [protein-PII]-uridylyl-L-tyrosine + H2O = [protein-PII]-L-tyrosine + UMP + H(+). Its activity is regulated as follows. Uridylyltransferase (UTase) activity is inhibited by glutamine, while glutamine activates uridylyl-removing (UR) activity. Modifies, by uridylylation and deuridylylation, the PII regulatory proteins (GlnB and homologs), in response to the nitrogen status of the cell that GlnD senses through the glutamine level. Under low glutamine levels, catalyzes the conversion of the PII proteins and UTP to PII-UMP and PPi, while under higher glutamine levels, GlnD hydrolyzes PII-UMP to PII and UMP (deuridylylation). Thus, controls uridylylation state and activity of the PII proteins, and plays an important role in the regulation of nitrogen assimilation and metabolism. This chain is Bifunctional uridylyltransferase/uridylyl-removing enzyme, found in Ectopseudomonas mendocina (strain ymp) (Pseudomonas mendocina).